The following is a 69-amino-acid chain: Protein SlyX homolog (69 aa).

The protein belongs to the SlyX family.

This is Protein SlyX homolog from Pseudomonas aeruginosa (strain LESB58).